The sequence spans 383 residues: Insecticidal crystal protein Cry35Ab1 (383 aa).

Residues 26–138 form the Ricin B-type lectin domain; it reads DDSGVSLMNK…NNPNQQWNLT (113 aa).

Belongs to the toxin_10 family. In terms of assembly, monomer in solution. Copurifies from parasporal inclusion bodies with Cry34Ab1. Proteolytic processing occurs near the C-terminus yielding a stable protein of approximately 40 kDa; this may be the active form of the protein.

Its function is as follows. Component of a binary insecticidal toxin active on western corn rootworm (WCR, Diabrotica virgifera subsp. virgifera Le Conte) and probably also on northern corn rootworm (D.barberi). Both proteins are required for maximal toxicity. The larval midgut epithelium is probably the primary target. This protein alone has no activity against southern corn rootworm (Diabrotica undecimpunctata howardi Barber), but it synergizes the toxic effect of its Cry34Ab1 partner. The 2 proteins individually and together form ion channels; channels made in the presence of the 2 proteins have higher conductance. Binds to WCR third instar midgut brush border membrane vesicles; binding improves over 10-fold in the presence of Cry34Ab1. The chain is Insecticidal crystal protein Cry35Ab1 from Bacillus thuringiensis.